An 82-amino-acid polypeptide reads, in one-letter code: Putative membrane protein insertion efficiency factor (82 aa).

Belongs to the UPF0161 family.

It is found in the cell inner membrane. Functionally, could be involved in insertion of integral membrane proteins into the membrane. The chain is Putative membrane protein insertion efficiency factor from Rickettsia africae (strain ESF-5).